Consider the following 203-residue polypeptide: Glycerol-3-phosphate acyltransferase (203 aa).

Transmembrane regions (helical) follow at residues 12–32 (ATLLCLAFGYLLGSIPFGLIL), 66–86 (TLLLDALKGTAAAAIASLWGV), 88–108 (AGIAAGLAAFLGHLFPVWLSF), 118–138 (IGVLLGLAPLMVPAFAAIWLA), and 159–179 (IALYATGYGKVALLFALMTVI).

This sequence belongs to the PlsY family. In terms of assembly, probably interacts with PlsX.

Its subcellular location is the cell inner membrane. The enzyme catalyses an acyl phosphate + sn-glycerol 3-phosphate = a 1-acyl-sn-glycero-3-phosphate + phosphate. Its pathway is lipid metabolism; phospholipid metabolism. Its function is as follows. Catalyzes the transfer of an acyl group from acyl-phosphate (acyl-PO(4)) to glycerol-3-phosphate (G3P) to form lysophosphatidic acid (LPA). This enzyme utilizes acyl-phosphate as fatty acyl donor, but not acyl-CoA or acyl-ACP. The sequence is that of Glycerol-3-phosphate acyltransferase from Sinorhizobium fredii (strain NBRC 101917 / NGR234).